The sequence spans 143 residues: Large ribosomal subunit protein uL15 (143 aa).

A compositionally biased stretch (basic residues) spans 1-13 (MIRKKKKVKKIRG). The segment at 1–39 (MIRKKKKVKKIRGSRTCGGGSHKKRRGAGNKGGRGMAGG) is disordered. The segment covering 29–38 (GNKGGRGMAG) has biased composition (gly residues).

This sequence belongs to the universal ribosomal protein uL15 family. In terms of assembly, part of the 50S ribosomal subunit.

Its function is as follows. Binds to the 23S rRNA. The protein is Large ribosomal subunit protein uL15 of Methanocaldococcus jannaschii (strain ATCC 43067 / DSM 2661 / JAL-1 / JCM 10045 / NBRC 100440) (Methanococcus jannaschii).